The chain runs to 206 residues: Ribosomal RNA small subunit methyltransferase G (206 aa).

S-adenosyl-L-methionine is bound by residues Gly73, Leu78, 124 to 125, and Arg139; that span reads VE.

It belongs to the methyltransferase superfamily. RNA methyltransferase RsmG family.

The protein localises to the cytoplasm. The catalysed reaction is guanosine(527) in 16S rRNA + S-adenosyl-L-methionine = N(7)-methylguanosine(527) in 16S rRNA + S-adenosyl-L-homocysteine. Its function is as follows. Specifically methylates the N7 position of guanine in position 527 of 16S rRNA. The chain is Ribosomal RNA small subunit methyltransferase G from Pectobacterium atrosepticum (strain SCRI 1043 / ATCC BAA-672) (Erwinia carotovora subsp. atroseptica).